A 584-amino-acid chain; its full sequence is 2-succinyl-5-enolpyruvyl-6-hydroxy-3-cyclohexene-1-carboxylate synthase (584 aa).

A disordered region spans residues 563–584; the sequence is TDAEASHRERERLADRVTGLSV. Basic and acidic residues predominate over residues 566–577; it reads EASHRERERLAD.

This sequence belongs to the TPP enzyme family. MenD subfamily. In terms of assembly, homodimer. The cofactor is Mg(2+). It depends on Mn(2+) as a cofactor. Thiamine diphosphate is required as a cofactor.

It catalyses the reaction isochorismate + 2-oxoglutarate + H(+) = 5-enolpyruvoyl-6-hydroxy-2-succinyl-cyclohex-3-ene-1-carboxylate + CO2. The protein operates within quinol/quinone metabolism; 1,4-dihydroxy-2-naphthoate biosynthesis; 1,4-dihydroxy-2-naphthoate from chorismate: step 2/7. It functions in the pathway quinol/quinone metabolism; menaquinone biosynthesis. Catalyzes the thiamine diphosphate-dependent decarboxylation of 2-oxoglutarate and the subsequent addition of the resulting succinic semialdehyde-thiamine pyrophosphate anion to isochorismate to yield 2-succinyl-5-enolpyruvyl-6-hydroxy-3-cyclohexene-1-carboxylate (SEPHCHC). The protein is 2-succinyl-5-enolpyruvyl-6-hydroxy-3-cyclohexene-1-carboxylate synthase of Halobacterium salinarum (strain ATCC 29341 / DSM 671 / R1).